Consider the following 562-residue polypeptide: Serine palmitoyltransferase 2 (562 aa).

Residues 67 to 87 (PMLVAVLTYVGYGVLTLFGYL) traverse the membrane as a helical segment. K379 carries the N6-(pyridoxal phosphate)lysine modification.

The protein belongs to the class-II pyridoxal-phosphate-dependent aminotransferase family. In terms of assembly, component of the serine palmitoyltransferase (SPT) complex, which is composed of SPTLC1, SPTLC2 or SPTLC3 and SPTSSA or SPTSSB. The heterodimer consisting of SPTLC1 and SPTLC2/SPTLC3 forms the catalytic core of the enzyme, while SPTSSA or SPTSSB subunits determine substrate specificity. SPT also interacts with ORMDL proteins, especially ORMDL3, which negatively regulate SPT activity in the presence of ceramides. Forms dimers of heterodimers with SPTLC1. Pyridoxal 5'-phosphate is required as a cofactor. Widely expressed.

The protein localises to the endoplasmic reticulum membrane. The catalysed reaction is L-serine + hexadecanoyl-CoA + H(+) = 3-oxosphinganine + CO2 + CoA. It catalyses the reaction octadecanoyl-CoA + L-serine + H(+) = 3-oxoeicosasphinganine + CO2 + CoA. Its pathway is lipid metabolism; sphingolipid metabolism. Its activity is regulated as follows. SPT complex catalytic activity is negatively regulated by ORMDL proteins, including ORMDL3, in the presence of ceramides. This mechanism allows to maintain ceramide levels at sufficient concentrations for the production of complex sphingolipids, but which prevents the accumulation of ceramides to levels that trigger apoptosis. Functionally, component of the serine palmitoyltransferase multisubunit enzyme (SPT) that catalyzes the initial and rate-limiting step in sphingolipid biosynthesis by condensing L-serine and activated acyl-CoA (most commonly palmitoyl-CoA) to form long-chain bases. The SPT complex is composed of SPTLC1, SPTLC2 or SPTLC3 and SPTSSA or SPTSSB. Within this complex, the heterodimer consisting of SPTLC1 and SPTLC2/SPTLC3 forms the catalytic core. The composition of the serine palmitoyltransferase (SPT) complex determines the substrate preference. The SPTLC1-SPTLC2-SPTSSA complex shows a strong preference for C16-CoA substrate, while the SPTLC1-SPTLC3-SPTSSA isozyme uses both C14-CoA and C16-CoA as substrates, with a slight preference for C14-CoA. The SPTLC1-SPTLC2-SPTSSB complex shows a strong preference for C18-CoA substrate, while the SPTLC1-SPTLC3-SPTSSB isozyme displays an ability to use a broader range of acyl-CoAs, without apparent preference. Crucial for adipogenesis. The polypeptide is Serine palmitoyltransferase 2 (Homo sapiens (Human)).